We begin with the raw amino-acid sequence, 483 residues long: Protein adenylyltransferase Fic (483 aa).

A helical membrane pass occupies residues 20-42 (AFFFIAGSLATFVFHALTSSSSV). TPR repeat units follow at residues 107 to 140 (ALGAMRLALDMHISGKDDKAARLFEHALALAPKH) and 141 to 175 (PEVLLRYGEFLEHNQRNIVLADQYYFQALSISPSN). The Inhibitory (S/T)XXXE(G/N) motif motif lies at 232–237 (SVGIEG). Residues Glu-236 and 317–320 (VGGH) each bind ATP. The 136-residue stretch at 286–421 (ITLKDILELH…IRPFVRFIAD (136 aa)) folds into the Fido domain. Residue His-364 is part of the active site. ATP contacts are provided by residues 368 to 375 (DGNGRTSR), 400 to 401 (YY), and Asn-408. Residues 464-483 (SAPEPYESGSGLDSGVNGMP) form a disordered region.

The protein belongs to the fic family. In terms of assembly, homodimer.

It is found in the membrane. The catalysed reaction is L-tyrosyl-[protein] + ATP = O-(5'-adenylyl)-L-tyrosyl-[protein] + diphosphate. It carries out the reaction L-threonyl-[protein] + ATP = 3-O-(5'-adenylyl)-L-threonyl-[protein] + diphosphate. It catalyses the reaction 3-O-(5'-adenylyl)-L-threonyl-[protein] + H2O = L-threonyl-[protein] + AMP + H(+). With respect to regulation, the side chain of Glu-236 determines which of the two opposing activities (AMPylase or de-AMPylase) will take place. In response to endoplasmic reticulum stress, mediates de-AMPylase activity. Adenylyltransferase activity is inhibited by the inhibitory helix present at the N-terminus: Glu-236 binds ATP and competes with ATP-binding at Arg-375, thereby preventing adenylyltransferase activity. In unstressed cells, disengagement of Glu-236 promotes adenylyltransferase activity. Activation dissociates ATP-binding from Glu-236, allowing ordered binding of the entire ATP moiety with the alpha-phosphate in an orientation that is productive for accepting an incoming target hydroxyl side chain. In terms of biological role, protein that can both mediate the addition of adenosine 5'-monophosphate (AMP) to specific residues of target proteins (AMPylation), and the removal of the same modification from target proteins (de-AMPylation), depending on the context. The side chain of Glu-236 determines which of the two opposing activities (AMPylase or de-AMPylase) will take place. Acts as a key regulator of the unfolded protein response (UPR) by mediating AMPylation or de-AMPylation of Hsc70-3/BiP. In unstressed cells, acts as an adenylyltransferase by mediating AMPylation of Hsc70-3/BiP at 'Thr-518', thereby inactivating it. In response to endoplasmic reticulum stress, acts as a phosphodiesterase by mediating removal of ATP (de-AMPylation) from Hsc70-3/BiP at 'Thr-518', leading to restore HSPA5/BiP activity. The polypeptide is Protein adenylyltransferase Fic (Drosophila grimshawi (Hawaiian fruit fly)).